The chain runs to 338 residues: Thiamine thiazole synthase (338 aa).

Positions Met-1–Lys-43 are disordered. The segment covering Lys-11–Gln-21 has biased composition (polar residues). Residues Ala-91, Glu-112–Ser-113, Gly-120, and Cys-185 contribute to the substrate site. The residue at position 221 (Cys-221) is a 2,3-didehydroalanine (Cys). Substrate is bound by residues Asp-223, His-238, Met-290, and Arg-300 to Gly-302.

It belongs to the THI4 family. In terms of assembly, homooctamer. It depends on Fe cation as a cofactor. Post-translationally, during the catalytic reaction, a sulfide is transferred from Cys-221 to a reaction intermediate, generating a dehydroalanine residue. In terms of tissue distribution, highly expressed in haustoria, and only in low amounts in intercellular hyphae. Found in the basal hyphae of the uredia, but not in the pedicels and only at very low levels in uredospores.

It localises to the cytoplasm. It is found in the nucleus. The catalysed reaction is [ADP-thiazole synthase]-L-cysteine + glycine + NAD(+) = [ADP-thiazole synthase]-dehydroalanine + ADP-5-ethyl-4-methylthiazole-2-carboxylate + nicotinamide + 3 H2O + 2 H(+). Involved in biosynthesis of the thiamine precursor thiazole. Catalyzes the conversion of NAD and glycine to adenosine diphosphate 5-(2-hydroxyethyl)-4-methylthiazole-2-carboxylic acid (ADT), an adenylated thiazole intermediate. The reaction includes an iron-dependent sulfide transfer from a conserved cysteine residue of the protein to a thiazole intermediate. The enzyme can only undergo a single turnover, which suggests it is a suicide enzyme. May have additional roles in adaptation to various stress conditions and in DNA damage tolerance. This is Thiamine thiazole synthase (THI2) from Uromyces fabae (Rust fungus).